Reading from the N-terminus, the 197-residue chain is uncharacterized protein (197 aa).

Helical transmembrane passes span 30–50 (WVAM…VEMA), 61–81 (LVAG…PPLV), 101–121 (LWSV…LGLA), and 130–150 (IGEF…VAML).

It localises to the cell membrane. This is an uncharacterized protein from Mycobacterium tuberculosis (strain CDC 1551 / Oshkosh).